We begin with the raw amino-acid sequence, 271 residues long: Centromere protein K (271 aa).

Coiled coils occupy residues 11-44 (DTIT…QNKL) and 102-151 (LRCD…VENQ).

This sequence belongs to the CENP-K/MCM22 family. Component of the CENPA-CAD complex, composed of CENPI, CENPK, CENPL, CENPO, CENPP, CENPQ, CENPR and CENPS. The CENPA-CAD complex interacts with the CENPA-NAC complex, at least composed of CENPA, CENPC, CENPH, CENPM, CENPN, CENPT and CENPU. May interact with Sox6. As to expression, highly expressed in testis.

The protein resides in the nucleus. It is found in the chromosome. Its subcellular location is the centromere. It localises to the kinetochore. In terms of biological role, component of the CENPA-CAD (nucleosome distal) complex, a complex recruited to centromeres which is involved in assembly of kinetochore proteins, mitotic progression and chromosome segregation. May be involved in incorporation of newly synthesized CENPA into centromeres via its interaction with the CENPA-NAC complex. Acts in coordination with KNL1 to recruit the NDC80 complex to the outer kinetochore. The protein is Centromere protein K (Cenpk) of Mus musculus (Mouse).